Consider the following 496-residue polypeptide: NADH-quinone oxidoreductase subunit N (496 aa).

The next 14 helical transmembrane spans lie at 8–28 (LLST…VGLI), 37–57 (MFPL…YDFF), 73–93 (QFAG…VLST), 110–130 (LLLL…LLTM), 131–151 (YVGL…HPND), 162–182 (LVLG…IYGL), 203–223 (TILA…LVPF), 235–255 (PAPI…AALV), 271–291 (GLIL…LMAF), 300–320 (MAYS…AVSI), 341–361 (GVLF…AVIT), 386–406 (AAVL…AGFV), 421–441 (VWIA…YLSI), and 464–484 (FGMI…TPLA).

This sequence belongs to the complex I subunit 2 family. In terms of assembly, NDH-1 is composed of 14 different subunits. Subunits NuoA, H, J, K, L, M, N constitute the membrane sector of the complex.

The protein localises to the cell membrane. The enzyme catalyses a quinone + NADH + 5 H(+)(in) = a quinol + NAD(+) + 4 H(+)(out). NDH-1 shuttles electrons from NADH, via FMN and iron-sulfur (Fe-S) centers, to quinones in the respiratory chain. The immediate electron acceptor for the enzyme in this species is believed to be a menaquinone. Couples the redox reaction to proton translocation (for every two electrons transferred, four hydrogen ions are translocated across the cytoplasmic membrane), and thus conserves the redox energy in a proton gradient. The sequence is that of NADH-quinone oxidoreductase subunit N from Desulfitobacterium hafniense (strain DSM 10664 / DCB-2).